We begin with the raw amino-acid sequence, 373 residues long: Leucine aminopeptidase 1 (373 aa).

Residues 1 to 18 (MKLLSVLALSATASSVLG) form the signal peptide. Positions 19-75 (ASIPVDTRAEKFLIELAPGETRWVTEEEKWALKESGQDFFDITDEEVGFTAAVAQPA) are excised as a propeptide. Zn(2+)-binding residues include His176 and Asp195. N-linked (GlcNAc...) asparagine glycosylation is present at Asn196. Zn(2+) contacts are provided by Glu234 and Asp261. Asn288 carries an N-linked (GlcNAc...) asparagine glycan. Cys310 and Cys314 are oxidised to a cystine. His343 contacts Zn(2+). N-linked (GlcNAc...) asparagine glycosylation occurs at Asn348.

Belongs to the peptidase M28 family. M28E subfamily. In terms of assembly, monomer. Requires Zn(2+) as cofactor.

Its subcellular location is the secreted. Extracellular aminopeptidase that allows assimilation of proteinaceous substrates. In Arthroderma gypseum (strain ATCC MYA-4604 / CBS 118893) (Microsporum gypseum), this protein is Leucine aminopeptidase 1 (LAP1).